Here is a 714-residue protein sequence, read N- to C-terminus: Phosphoribosylformylglycinamidine synthase subunit PurL (714 aa).

The active site involves H34. Residue Y37 participates in ATP binding. A Mg(2+)-binding site is contributed by E78. Substrate is bound by residues 79 to 82 (SHNH) and R101. Residue H80 is the Proton acceptor of the active site. D102 contacts Mg(2+). Q226 contributes to the substrate binding site. D254 serves as a coordination point for Mg(2+). 298-300 (ESQ) is a binding site for substrate. ATP contacts are provided by D474 and G511. N512 lines the Mg(2+) pocket. S514 serves as a coordination point for substrate.

This sequence belongs to the FGAMS family. Monomer. Part of the FGAM synthase complex composed of 1 PurL, 1 PurQ and 2 PurS subunits.

The protein resides in the cytoplasm. The catalysed reaction is N(2)-formyl-N(1)-(5-phospho-beta-D-ribosyl)glycinamide + L-glutamine + ATP + H2O = 2-formamido-N(1)-(5-O-phospho-beta-D-ribosyl)acetamidine + L-glutamate + ADP + phosphate + H(+). Its pathway is purine metabolism; IMP biosynthesis via de novo pathway; 5-amino-1-(5-phospho-D-ribosyl)imidazole from N(2)-formyl-N(1)-(5-phospho-D-ribosyl)glycinamide: step 1/2. Functionally, part of the phosphoribosylformylglycinamidine synthase complex involved in the purines biosynthetic pathway. Catalyzes the ATP-dependent conversion of formylglycinamide ribonucleotide (FGAR) and glutamine to yield formylglycinamidine ribonucleotide (FGAM) and glutamate. The FGAM synthase complex is composed of three subunits. PurQ produces an ammonia molecule by converting glutamine to glutamate. PurL transfers the ammonia molecule to FGAR to form FGAM in an ATP-dependent manner. PurS interacts with PurQ and PurL and is thought to assist in the transfer of the ammonia molecule from PurQ to PurL. This Methanothermobacter thermautotrophicus (strain ATCC 29096 / DSM 1053 / JCM 10044 / NBRC 100330 / Delta H) (Methanobacterium thermoautotrophicum) protein is Phosphoribosylformylglycinamidine synthase subunit PurL.